An 874-amino-acid polypeptide reads, in one-letter code: Ectonucleotide pyrophosphatase/phosphodiesterase family member 3 (874 aa).

Residues 1–11 (MDSRLALATEE) are Cytoplasmic-facing. The helical; Signal-anchor for type II membrane protein transmembrane segment at 12 to 30 (PIKKDSLKKYKILCVVLLA) threads the bilayer. Over 31-874 (LLVIVSLGLG…TYLPTFETII (844 aa)) the chain is Extracellular. SMB domains follow at residues 51 to 93 (QGSC…VKST) and 94 to 138 (QIWT…GESP). 13 cysteine pairs are disulfide-bonded: C54–C58, C54–C71, C58–C89, C69–C71, C69–C82, C75–C81, C82–C89, C98–C115, C103–C133, C113–C126, C119–C125, C144–C190, and C152–C364. The Cell attachment site signature appears at 78 to 80 (RGD). Positions 160–544 (PVILFSMDGF…HGSLNHLLKT (385 aa)) are phosphodiesterase. D167 provides a ligand contact to Zn(2+). K204 lines the ATP pocket. T205 contacts Zn(2+). T205 (nucleophile) is an active-site residue. Residue N226 participates in ATP binding. A glycan (N-linked (GlcNAc...) asparagine) is linked at N236. D275 provides a ligand contact to ATP. 2 N-linked (GlcNAc...) asparagine glycosylation sites follow: N279 and N288. An ATP-binding site is contributed by Y289. The Zn(2+) site is built by D325, H329, D372, and H373. 6 disulfides stabilise this stretch: C380–C477, C428–C817, C561–C623, C574–C679, C576–C664, and C786–C796. The N-linked (GlcNAc...) asparagine glycan is linked to N425. H482 lines the Zn(2+) pocket. N-linked (GlcNAc...) asparagine glycosylation is found at N532, N594, N687, and N701. The segment at 581–874 (NTPGLEEQAN…TYLPTFETII (294 aa)) is nuclease. Positions 751, 753, 755, 757, and 759 each coordinate Ca(2+). A glycan (N-linked (GlcNAc...) asparagine) is linked at N820.

As to quaternary structure, monomer and homodimer. It depends on Zn(2+) as a cofactor. In terms of processing, N-glycosylated. N-glycosylation is necessary for normal transport to the cell membrane, but is not the apical targeting signal. As to expression, detected at the tip of villi in the small intestine. Detected on basophils and mast cells (at protein level). Detected in the epithelial layer of the small intestine; expression is higher in the proximal part and lower in the distal part of the small intestine.

It localises to the cell membrane. It is found in the apical cell membrane. The protein localises to the secreted. It catalyses the reaction a ribonucleoside 5'-triphosphate + H2O = a ribonucleoside 5'-phosphate + diphosphate + H(+). The enzyme catalyses UDP-N-acetyl-alpha-D-glucosamine + H2O = N-acetyl-alpha-D-glucosamine 1-phosphate + UMP + 2 H(+). It carries out the reaction ATP + H2O = AMP + diphosphate + H(+). The catalysed reaction is CTP + H2O = CMP + diphosphate + H(+). It catalyses the reaction GTP + H2O = GMP + diphosphate + H(+). The enzyme catalyses UTP + H2O = UMP + diphosphate + H(+). It carries out the reaction Hydrolytically removes 5'-nucleotides successively from the 3'-hydroxy termini of 3'-hydroxy-terminated oligonucleotides.. The catalysed reaction is P(1),P(3)-bis(5'-adenosyl) triphosphate + H2O = AMP + ADP + 2 H(+). It catalyses the reaction P(1),P(4)-bis(5'-adenosyl) tetraphosphate + H2O = AMP + ATP + 2 H(+). The enzyme catalyses P(1),P(5)-bis(5'-adenosyl) pentaphosphate + H2O = adenosine 5'-tetraphosphate + AMP + 2 H(+). It carries out the reaction P(1),P(4)-bis(5'-guanosyl) tetraphosphate + H2O = GMP + GTP + 2 H(+). Its function is as follows. Hydrolase that metabolizes extracellular nucleotides, including ATP, GTP, UTP and CTP. Limits mast cells and basophils response during inflammation and during the chronic phases of allergic responses by eliminating extracellular ATP, a signaling molecule activating these cells in an autocrine manner. Metabolizes extracellular ATP in the lumen of the small intestine, and thereby prevents ATP-induced apoptosis of intestinal plasmacytoid dendritic cells. Has a broad specificity and can also hydrolyze UDP-GlcNAc into UMP and GlcNAc-1-phosphate and potentially several other intracellular nucleotide sugars, including UDP-GalNAc, CMP-NeuAc, GDP-Fuc, and UDP-GlcA. Thereby, could modulate glycan biosynthesis and protein glycosylation. Can hydrolyze extracellular dinucleoside polyphosphates, including the vasoactive adenosine polyphosphates as well. In addition, displays an alkaline phosphodiesterase activity in vitro. This chain is Ectonucleotide pyrophosphatase/phosphodiesterase family member 3, found in Mus musculus (Mouse).